Here is a 163-residue protein sequence, read N- to C-terminus: DNA polymerase epsilon subunit D (163 aa).

2 disordered regions span residues 1–22 (MPPKGHKKTADGDFRPVNSAGN) and 126–163 (RKKDKVVRAQDDQDHISSSESETEATEEEGNKRIRTDE). Composition is skewed to basic and acidic residues over residues 126-142 (RKKDKVVRAQDDQDHIS) and 154-163 (EGNKRIRTDE).

In terms of assembly, heterotetramer. Consists of four subunits: POL2, DPB2, DPB3 and DPB4.

The protein localises to the nucleus. As accessory component of the DNA polymerase epsilon (DNA polymerase II) participates in chromosomal DNA replication. The chain is DNA polymerase epsilon subunit D (DPB4) from Yarrowia lipolytica (strain CLIB 122 / E 150) (Yeast).